The primary structure comprises 317 residues: 4-hydroxy-3-methylbut-2-enyl diphosphate reductase (317 aa).

Cys-12 lines the [4Fe-4S] cluster pocket. (2E)-4-hydroxy-3-methylbut-2-enyl diphosphate-binding residues include His-41 and His-74. Dimethylallyl diphosphate-binding residues include His-41 and His-74. Isopentenyl diphosphate contacts are provided by His-41 and His-74. Cys-97 serves as a coordination point for [4Fe-4S] cluster. Residue His-125 participates in (2E)-4-hydroxy-3-methylbut-2-enyl diphosphate binding. His-125 is a dimethylallyl diphosphate binding site. Position 125 (His-125) interacts with isopentenyl diphosphate. The Proton donor role is filled by Glu-127. Thr-168 is a binding site for (2E)-4-hydroxy-3-methylbut-2-enyl diphosphate. Cys-198 serves as a coordination point for [4Fe-4S] cluster. 4 residues coordinate (2E)-4-hydroxy-3-methylbut-2-enyl diphosphate: Ser-226, Ser-227, Asn-228, and Ser-270. Dimethylallyl diphosphate is bound by residues Ser-226, Ser-227, Asn-228, and Ser-270. Positions 226, 227, 228, and 270 each coordinate isopentenyl diphosphate.

The protein belongs to the IspH family. As to quaternary structure, homodimer. [4Fe-4S] cluster serves as cofactor.

The catalysed reaction is isopentenyl diphosphate + 2 oxidized [2Fe-2S]-[ferredoxin] + H2O = (2E)-4-hydroxy-3-methylbut-2-enyl diphosphate + 2 reduced [2Fe-2S]-[ferredoxin] + 2 H(+). It carries out the reaction dimethylallyl diphosphate + 2 oxidized [2Fe-2S]-[ferredoxin] + H2O = (2E)-4-hydroxy-3-methylbut-2-enyl diphosphate + 2 reduced [2Fe-2S]-[ferredoxin] + 2 H(+). It functions in the pathway isoprenoid biosynthesis; dimethylallyl diphosphate biosynthesis; dimethylallyl diphosphate from (2E)-4-hydroxy-3-methylbutenyl diphosphate: step 1/1. Its pathway is isoprenoid biosynthesis; isopentenyl diphosphate biosynthesis via DXP pathway; isopentenyl diphosphate from 1-deoxy-D-xylulose 5-phosphate: step 6/6. Functionally, catalyzes the conversion of 1-hydroxy-2-methyl-2-(E)-butenyl 4-diphosphate (HMBPP) into a mixture of isopentenyl diphosphate (IPP) and dimethylallyl diphosphate (DMAPP). Acts in the terminal step of the DOXP/MEP pathway for isoprenoid precursor biosynthesis. In Yersinia pseudotuberculosis serotype IB (strain PB1/+), this protein is 4-hydroxy-3-methylbut-2-enyl diphosphate reductase.